The following is a 466-amino-acid chain: Probable ribonuclease FAU-1 (466 aa).

Residues 90-152 (GAIYAGTVTD…TDGRPVLDTT (63 aa)) form the S1 motif domain.

This sequence belongs to the FAU-1 family.

Functionally, probable RNase involved in rRNA stability through maturation and/or degradation of precursor rRNAs. Binds to RNA in loop regions with AU-rich sequences. This is Probable ribonuclease FAU-1 from Haloarcula marismortui (strain ATCC 43049 / DSM 3752 / JCM 8966 / VKM B-1809) (Halobacterium marismortui).